Reading from the N-terminus, the 759-residue chain is Subtilisin-like serine-protease S (759 aa).

The N-terminal stretch at 1–22 is a signal peptide; the sequence is MGSAKILSFTLLLFVGYTLVHG. In terms of domain architecture, Inhibitor I9 spans 28–105; it reads YIVYMGDRSH…SVFESKMNKL (78 aa). The Peptidase S8 domain occupies 110–613; that stretch reads SWDFLGLDTV…SGHVNPVASL (504 aa). Asp139 (charge relay system) is an active-site residue. The N-linked (GlcNAc...) asparagine glycan is linked to Asn170. The Charge relay system role is filled by His215. N-linked (GlcNAc...) asparagine glycosylation is found at Asn230 and Asn388. The PA domain occupies 390–462; it reads SFCKEHTLDP…MIGQDAVEEL (73 aa). Catalysis depends on Ser545, which acts as the Charge relay system. N-linked (GlcNAc...) asparagine glycans are attached at residues Asn593, Asn642, and Asn671.

The protein belongs to the peptidase S8 family.

It localises to the secreted. The protein resides in the extracellular space. Its subcellular location is the apoplast. In terms of biological role, required for arbuscular mycorrhiza (AM) development during AM symbiosis with AM fungi (e.g. Glomeromycota intraradices). This is Subtilisin-like serine-protease S from Lotus japonicus (Lotus corniculatus var. japonicus).